The following is a 53-amino-acid chain: Alpha-1-antiproteinase 1 (53 aa).

The disordered stretch occupies residues Glu-1–Leu-28.

It belongs to the serpin family. Post-translationally, N-glycosylated; contains biantennary glycans. Plasma.

The protein localises to the secreted. In Equus caballus (Horse), this protein is Alpha-1-antiproteinase 1.